Here is a 204-residue protein sequence, read N- to C-terminus: Urease accessory protein UreG (204 aa).

12 to 19 (GPVGSGKT) provides a ligand contact to GTP.

This sequence belongs to the SIMIBI class G3E GTPase family. UreG subfamily. In terms of assembly, homodimer. UreD, UreF and UreG form a complex that acts as a GTP-hydrolysis-dependent molecular chaperone, activating the urease apoprotein by helping to assemble the nickel containing metallocenter of UreC. The UreE protein probably delivers the nickel.

It is found in the cytoplasm. Its function is as follows. Facilitates the functional incorporation of the urease nickel metallocenter. This process requires GTP hydrolysis, probably effectuated by UreG. The polypeptide is Urease accessory protein UreG (Streptococcus salivarius (strain 57.I)).